An 878-amino-acid chain; its full sequence is DNA mismatch repair protein MutS (878 aa).

618 to 625 (GPNMGGKS) provides a ligand contact to ATP. Composition is skewed to basic and acidic residues over residues 800-811 (LEEESSRQRAEP) and 863-878 (GADK…ARSR). Disordered regions lie at residues 800–842 (LEEE…PDEL) and 859–878 (SGEE…ARSR).

The protein belongs to the DNA mismatch repair MutS family.

Its function is as follows. This protein is involved in the repair of mismatches in DNA. It is possible that it carries out the mismatch recognition step. This protein has a weak ATPase activity. The protein is DNA mismatch repair protein MutS of Alkalilimnicola ehrlichii (strain ATCC BAA-1101 / DSM 17681 / MLHE-1).